The following is a 303-amino-acid chain: MTPQELKSILSSGLLSFPVTDFDAAGDFDAESYARRLEWLAPYGASALFAAGGTGEFFSLGLDEYPRIIKTAVDTCAGSVPILAGVGGPTRQAIHMAQEAERLGAKGLLLLPHYLTEASQEGVAAHVEAVCRAVKIGVVVYNRNVCRLTPALLEQLAERCPNLVGYKDGLGEIELMVSVRHRLGERFAYLGGLPTAEVYAAAYKALGVPVYSSAVFNFIPRTAMEFYKAVAADDQVTVGRLIDDFFLPLLEIRNRRAGYAVSIVKAGVRVIGHDAGPVRAPLTDLLPDEYERLAALIRKLGPQ.

This sequence belongs to the DapA family.

The enzyme catalyses 5-dehydro-4-deoxy-D-glucarate + H(+) = 2,5-dioxopentanoate + CO2 + H2O. The protein operates within carbohydrate acid metabolism; D-glucarate degradation; 2,5-dioxopentanoate from D-glucarate: step 2/2. This is Probable 5-dehydro-4-deoxyglucarate dehydratase from Azotobacter vinelandii (strain DJ / ATCC BAA-1303).